The following is a 208-amino-acid chain: NAD(P)H dehydrogenase (quinone) (208 aa).

Residues 4–199 (VNVIFHSIHG…AMARYQGRHV (196 aa)) form the Flavodoxin-like domain. Residues 10–15 (SIHGHT) and 87–89 (TRY) each bind FMN. Residue Trp-107 participates in substrate binding. Residues 122–128 (SSGTQHG) and His-143 each bind FMN.

Belongs to the WrbA family. FMN serves as cofactor.

It carries out the reaction a quinone + NADH + H(+) = a quinol + NAD(+). The enzyme catalyses a quinone + NADPH + H(+) = a quinol + NADP(+). The sequence is that of NAD(P)H dehydrogenase (quinone) from Methanosarcina barkeri (strain Fusaro / DSM 804).